The primary structure comprises 189 residues: Heme-binding protein 1 (189 aa).

The protein belongs to the HEBP family. As to quaternary structure, monomer.

It localises to the cytoplasm. Functionally, may bind free porphyrinogens that may be present in the cell and thus facilitate removal of these potentially toxic compound. Binds with a high affinity to one molecule of heme or porphyrins. It binds metalloporphyrins, free porphyrins and N-methylprotoporphyrin with similar affinities. The protein is Heme-binding protein 1 (HEBP1) of Sus scrofa (Pig).